Consider the following 1029-residue polypeptide: Multidrug resistance protein MdtC (1029 aa).

The next 11 membrane-spanning stretches (helical) occupy residues 15–35, 333–353, 360–380, 387–407, 431–451, 469–489, 528–548, 853–873, 897–917, 953–973, and 984–1004; these read ILLS…LPVA, EVEQ…FLFL, LIPA…MYLC, LSLM…IVAL, VGFT…PLLL, VAIG…CGWL, LVGL…ISIP, VILI…LYES, AFDA…IGIV, PIMM…IASG, and ITIV…TPVV.

Belongs to the resistance-nodulation-cell division (RND) (TC 2.A.6) family. MdtC subfamily. In terms of assembly, part of a tripartite efflux system composed of MdtA, MdtB and MdtC. MdtC forms a heteromultimer with MdtB.

The protein resides in the cell inner membrane. The polypeptide is Multidrug resistance protein MdtC (Cronobacter sakazakii (strain ATCC BAA-894) (Enterobacter sakazakii)).